The sequence spans 881 residues: Valine--tRNA ligase (881 aa).

The 'HIGH' region signature appears at proline 49 to histidine 59. Positions lysine 526–serine 530 match the 'KMSKS' region motif. Residue lysine 529 coordinates ATP. The stretch at leucine 810–lysine 881 forms a coiled coil.

Belongs to the class-I aminoacyl-tRNA synthetase family. ValS type 1 subfamily. Monomer.

The protein localises to the cytoplasm. The catalysed reaction is tRNA(Val) + L-valine + ATP = L-valyl-tRNA(Val) + AMP + diphosphate. Catalyzes the attachment of valine to tRNA(Val). As ValRS can inadvertently accommodate and process structurally similar amino acids such as threonine, to avoid such errors, it has a 'posttransfer' editing activity that hydrolyzes mischarged Thr-tRNA(Val) in a tRNA-dependent manner. This Bacillus thuringiensis subsp. konkukian (strain 97-27) protein is Valine--tRNA ligase.